A 247-amino-acid chain; its full sequence is 3-deoxy-manno-octulosonate cytidylyltransferase (247 aa).

The protein belongs to the KdsB family.

It is found in the cytoplasm. The catalysed reaction is 3-deoxy-alpha-D-manno-oct-2-ulosonate + CTP = CMP-3-deoxy-beta-D-manno-octulosonate + diphosphate. The protein operates within nucleotide-sugar biosynthesis; CMP-3-deoxy-D-manno-octulosonate biosynthesis; CMP-3-deoxy-D-manno-octulosonate from 3-deoxy-D-manno-octulosonate and CTP: step 1/1. It participates in bacterial outer membrane biogenesis; lipopolysaccharide biosynthesis. In terms of biological role, activates KDO (a required 8-carbon sugar) for incorporation into bacterial lipopolysaccharide in Gram-negative bacteria. The sequence is that of 3-deoxy-manno-octulosonate cytidylyltransferase from Bdellovibrio bacteriovorus (strain ATCC 15356 / DSM 50701 / NCIMB 9529 / HD100).